Here is a 501-residue protein sequence, read N- to C-terminus: NAD(P)H-quinone oxidoreductase chain 4, chloroplastic (501 aa).

A run of 14 helical transmembrane segments spans residues 5-25, 38-58, 88-108, 114-131, 135-155, 168-188, 209-229, 243-263, 273-293, 306-326, 331-351, 387-407, 417-437, and 464-484; these read FPWL…IFFL, TCIC…HFQL, IGPI…AWPV, LFYL…GLFS, LLLF…LLSM, FILY…GMGL, ALEI…SPII, HYST…YGLI, AHSL…IYAA, IACS…SITD, GAIL…FLSG, LALP…GIIT, ILIT…LLSM, and FVSI…DCVF.

Belongs to the complex I subunit 4 family.

The protein resides in the plastid. The protein localises to the chloroplast thylakoid membrane. The catalysed reaction is a plastoquinone + NADH + (n+1) H(+)(in) = a plastoquinol + NAD(+) + n H(+)(out). The enzyme catalyses a plastoquinone + NADPH + (n+1) H(+)(in) = a plastoquinol + NADP(+) + n H(+)(out). The polypeptide is NAD(P)H-quinone oxidoreductase chain 4, chloroplastic (Dioscorea elephantipes (Elephant's foot yam)).